Consider the following 184-residue polypeptide: Thymidine kinase (184 aa).

ATP-binding positions include 15–22 (GPMFSGKS) and 89–92 (DEIQ). E90 acts as the Proton acceptor in catalysis. C146, C149, C178, and C181 together coordinate Zn(2+).

The protein belongs to the thymidine kinase family. Homotetramer.

Its subcellular location is the cytoplasm. It carries out the reaction thymidine + ATP = dTMP + ADP + H(+). This chain is Thymidine kinase, found in Mesomycoplasma hyopneumoniae (strain 232) (Mycoplasma hyopneumoniae).